Here is a 266-residue protein sequence, read N- to C-terminus: Undecaprenyl-diphosphatase (266 aa).

The next 7 membrane-spanning stretches (helical) occupy residues 41–61 (NLAFTIVVHVATVFSTLVILW), 82–102 (YVINILISMLPIGIVGVFFKD), 106–126 (AIFGSGLLIVGCMLLLTAALL), 140–160 (ISMKDAFIIGLAQACAVLPGL), 180–200 (LAQFSFLMVIPPILGEALLDG), 213–233 (IPTLSLIVGFIAAFVSGCLAC), and 245–265 (LIYFAIYCAIVGVVTIVVSQL).

The protein belongs to the UppP family.

The protein resides in the cell inner membrane. The enzyme catalyses di-trans,octa-cis-undecaprenyl diphosphate + H2O = di-trans,octa-cis-undecaprenyl phosphate + phosphate + H(+). Its function is as follows. Catalyzes the dephosphorylation of undecaprenyl diphosphate (UPP). Confers resistance to bacitracin. This Bacteroides fragilis (strain YCH46) protein is Undecaprenyl-diphosphatase.